Consider the following 374-residue polypeptide: Nuclear hormone receptor family member nhr-57 (374 aa).

The nuclear receptor DNA-binding region spans 7 to 84 (RKYCSVCHQL…VGMNPEVVQA (78 aa)). 2 consecutive NR C4-type zinc fingers follow at residues 10 to 30 (CSVC…CKAC) and 48 to 67 (CRKK…CKSC). In terms of domain architecture, NR LBD spans 124-374 (QMTPTLCGVM…DKIYKIIDGQ (251 aa)).

This sequence belongs to the nuclear hormone receptor family.

It is found in the nucleus. Functionally, orphan nuclear receptor. The chain is Nuclear hormone receptor family member nhr-57 (nhr-57) from Caenorhabditis elegans.